The chain runs to 171 residues: MNSIPEGRPTPNLQRTANKRGVARLAAVQALFQMDVAGTGVMEVVAEYEAFRLGKEVDGTQYLDADPQWFRAIVAGVVEDQLKLDPMIHQALTEDWPLSRLDSTLRAILRAGAWELKARKDVPTAVIVSEYVDIAKAFYTEDEPKLVNAVLDRLALVIRGESRGAKPRHKS.

It belongs to the NusB family.

Involved in transcription antitermination. Required for transcription of ribosomal RNA (rRNA) genes. Binds specifically to the boxA antiterminator sequence of the ribosomal RNA (rrn) operons. The sequence is that of Transcription antitermination protein NusB from Brucella melitensis biotype 1 (strain ATCC 23456 / CCUG 17765 / NCTC 10094 / 16M).